A 516-amino-acid chain; its full sequence is Apolipoprotein N-acyltransferase (516 aa).

Transmembrane regions (helical) follow at residues 23-43 (ILIL…AFAP), 68-88 (AFWL…RWIY), 94-114 (VAGL…AYLA), 135-155 (WLLA…WVMT), and 178-198 (LGGI…LAML). Residues 241-481 (AQGNIAQELK…VLTGFAQSRQ (241 aa)) form the CN hydrolase domain. The active-site Proton acceptor is Glu279. Residue Lys339 is part of the active site. The Nucleophile role is filled by Cys391. The helical transmembrane segment at 489–509 (FGNLPVVLGCGALLLLALLLG) threads the bilayer.

It belongs to the CN hydrolase family. Apolipoprotein N-acyltransferase subfamily.

The protein localises to the cell inner membrane. The catalysed reaction is N-terminal S-1,2-diacyl-sn-glyceryl-L-cysteinyl-[lipoprotein] + a glycerophospholipid = N-acyl-S-1,2-diacyl-sn-glyceryl-L-cysteinyl-[lipoprotein] + a 2-acyl-sn-glycero-3-phospholipid + H(+). The protein operates within protein modification; lipoprotein biosynthesis (N-acyl transfer). Functionally, catalyzes the phospholipid dependent N-acylation of the N-terminal cysteine of apolipoprotein, the last step in lipoprotein maturation. This is Apolipoprotein N-acyltransferase from Chromobacterium violaceum (strain ATCC 12472 / DSM 30191 / JCM 1249 / CCUG 213 / NBRC 12614 / NCIMB 9131 / NCTC 9757 / MK).